Reading from the N-terminus, the 231-residue chain is Probable transglycosylase SceD (231 aa).

An N-terminal signal peptide occupies residues 1 to 27; the sequence is MKKTLLASSLAVGLGIVAGNAGHEAHA. A compositionally biased stretch (polar residues) spans 93 to 116; it reads SAQAPATNNVEPSAVQANQVQSQE. The tract at residues 93–152 is disordered; the sequence is SAQAPATNNVEPSAVQANQVQSQEVEAPQNAQTQQPQASTSNNSQVTATPTESKASEGSS. Low complexity predominate over residues 119–137; it reads APQNAQTQQPQASTSNNSQ. Polar residues predominate over residues 138-152; sequence VTATPTESKASEGSS.

The protein belongs to the transglycosylase family. SceD subfamily.

The protein resides in the secreted. Is able to cleave peptidoglycan and affects clumping and separation of bacterial cells. The sequence is that of Probable transglycosylase SceD (sceD) from Staphylococcus aureus (strain Mu3 / ATCC 700698).